We begin with the raw amino-acid sequence, 278 residues long: GTPase Era (278 aa).

The Era-type G domain maps to 7–168 (YCGYIAIVGK…ENLIYPYLPN (162 aa)). The G1 stretch occupies residues 15 to 22 (GKPNVGKS). 15-22 (GKPNVGKS) contacts GTP. The tract at residues 41–45 (NTTQK) is G2. Residues 62–65 (DTPG) are G3. Residues 62 to 66 (DTPGI) and 117 to 120 (NKID) contribute to the GTP site. A G4 region spans residues 117 to 120 (NKID). The G5 stretch occupies residues 147–149 (ISA). The KH type-2 domain maps to 199–276 (LRDELPSIIT…YLIIWVKVKI (78 aa)).

Belongs to the TRAFAC class TrmE-Era-EngA-EngB-Septin-like GTPase superfamily. Era GTPase family. Monomer.

The protein resides in the cytoplasm. It is found in the cell membrane. Functionally, an essential GTPase that binds both GDP and GTP, with rapid nucleotide exchange. Plays a role in 16S rRNA processing and 30S ribosomal subunit biogenesis and possibly also in cell cycle regulation and energy metabolism. This is GTPase Era from Buchnera aphidicola subsp. Schizaphis graminum (strain Sg).